The sequence spans 112 residues: UPF0122 protein CPR_1686 (112 aa).

This sequence belongs to the UPF0122 family.

Its function is as follows. Might take part in the signal recognition particle (SRP) pathway. This is inferred from the conservation of its genetic proximity to ftsY/ffh. May be a regulatory protein. This Clostridium perfringens (strain SM101 / Type A) protein is UPF0122 protein CPR_1686.